The primary structure comprises 873 residues: Alanine--tRNA ligase (873 aa).

Zn(2+) is bound by residues histidine 559, histidine 563, cysteine 661, and histidine 665.

Belongs to the class-II aminoacyl-tRNA synthetase family. As to quaternary structure, homotetramer. The cofactor is Zn(2+).

It is found in the cytoplasm. It carries out the reaction tRNA(Ala) + L-alanine + ATP = L-alanyl-tRNA(Ala) + AMP + diphosphate. Catalyzes the attachment of alanine to tRNA(Ala) in a two-step reaction: alanine is first activated by ATP to form Ala-AMP and then transferred to the acceptor end of tRNA(Ala). Also edits incorrectly charged Ser-tRNA(Ala) and Gly-tRNA(Ala) via its editing domain. The chain is Alanine--tRNA ligase from Wigglesworthia glossinidia brevipalpis.